Here is a 37-residue protein sequence, read N- to C-terminus: Cytochrome b6-f complex subunit 5 (37 aa).

A helical transmembrane segment spans residues 5–25 (LLSGIVLGLVPVTITGLFVAA).

It belongs to the PetG family. As to quaternary structure, the 4 large subunits of the cytochrome b6-f complex are cytochrome b6, subunit IV (17 kDa polypeptide, PetD), cytochrome f and the Rieske protein, while the 4 small subunits are PetG, PetL, PetM and PetN. The complex functions as a dimer.

It is found in the plastid. The protein localises to the chloroplast thylakoid membrane. Functionally, component of the cytochrome b6-f complex, which mediates electron transfer between photosystem II (PSII) and photosystem I (PSI), cyclic electron flow around PSI, and state transitions. PetG is required for either the stability or assembly of the cytochrome b6-f complex. The sequence is that of Cytochrome b6-f complex subunit 5 from Emiliania huxleyi (Coccolithophore).